Reading from the N-terminus, the 90-residue chain is WAP four-disulfide core domain protein 12 (90 aa).

The first 23 residues, 1-23 (MGSSSFLVLMVSLALVTLVAVEG), serve as a signal peptide directing secretion. In terms of domain architecture, WAP spans 27 to 74 (GIEKAGVCPADNVRCFKSDPPQCHTDQDCLGERKCCYLHCGFKCVIPV). Disulfide bonds link Cys34-Cys62, Cys41-Cys66, Cys49-Cys61, and Cys55-Cys70.

The protein resides in the secreted. Its function is as follows. Antibacterial protein. Putative acid-stable proteinase inhibitor. This chain is WAP four-disulfide core domain protein 12 (WFDC12), found in Gorilla gorilla gorilla (Western lowland gorilla).